We begin with the raw amino-acid sequence, 166 residues long: Regulatory protein RecX (166 aa).

It belongs to the RecX family.

Its subcellular location is the cytoplasm. Its function is as follows. Modulates RecA activity. The sequence is that of Regulatory protein RecX from Shigella sonnei (strain Ss046).